Consider the following 504-residue polypeptide: Maturase K (504 aa).

The protein belongs to the intron maturase 2 family. MatK subfamily.

It localises to the plastid. The protein resides in the chloroplast. Its function is as follows. Usually encoded in the trnK tRNA gene intron. Probably assists in splicing its own and other chloroplast group II introns. In Betula papyrifera (Paper birch), this protein is Maturase K.